We begin with the raw amino-acid sequence, 640 residues long: Chaperone protein HtpG (640 aa).

The a; substrate-binding stretch occupies residues 1-352; that stretch reads MTEQTATQNY…SADLPLNVSR (352 aa). The b stretch occupies residues 353-571; sequence ELLQESRDVK…DGELSPQLIR (219 aa). Residues 572–640 are c; sequence MLKQAGQAVP…VKRINSLLLK (69 aa).

This sequence belongs to the heat shock protein 90 family. Homodimer.

It is found in the cytoplasm. Functionally, molecular chaperone. Has ATPase activity. This chain is Chaperone protein HtpG, found in Acinetobacter baylyi (strain ATCC 33305 / BD413 / ADP1).